A 215-amino-acid polypeptide reads, in one-letter code: 3-demethoxyubiquinol 3-hydroxylase (215 aa).

Residues Glu-64, Glu-94, His-97, Glu-146, Glu-178, and His-181 each contribute to the Fe cation site.

The protein belongs to the COQ7 family. It depends on Fe cation as a cofactor.

It is found in the cell membrane. It catalyses the reaction a 5-methoxy-2-methyl-3-(all-trans-polyprenyl)benzene-1,4-diol + AH2 + O2 = a 3-demethylubiquinol + A + H2O. It functions in the pathway cofactor biosynthesis; ubiquinone biosynthesis. Catalyzes the hydroxylation of 2-nonaprenyl-3-methyl-6-methoxy-1,4-benzoquinol during ubiquinone biosynthesis. The sequence is that of 3-demethoxyubiquinol 3-hydroxylase from Pseudomonas fluorescens (strain Pf0-1).